Consider the following 462-residue polypeptide: Argininosuccinate lyase (462 aa).

Belongs to the lyase 1 family. Argininosuccinate lyase subfamily.

It is found in the cytoplasm. The enzyme catalyses 2-(N(omega)-L-arginino)succinate = fumarate + L-arginine. The protein operates within amino-acid biosynthesis; L-arginine biosynthesis; L-arginine from L-ornithine and carbamoyl phosphate: step 3/3. The sequence is that of Argininosuccinate lyase from Chloroflexus aggregans (strain MD-66 / DSM 9485).